A 70-amino-acid chain; its full sequence is MIVPWQQISPEALSNLIREFVLREGTDYGESEYSLEEKIAQVQQQLECGEAVVVFSELHETVDIQLKQKF.

This sequence belongs to the UPF0270 family.

The chain is UPF0270 protein VV1_1320 from Vibrio vulnificus (strain CMCP6).